Consider the following 125-residue polypeptide: Large ribosomal subunit protein bL12 (125 aa).

Residues 95–125 (APKPIKEGVDKKTAEEAKKKLEEAGAKAELK) form a disordered region.

This sequence belongs to the bacterial ribosomal protein bL12 family. In terms of assembly, homodimer. Part of the ribosomal stalk of the 50S ribosomal subunit. Forms a multimeric L10(L12)X complex, where L10 forms an elongated spine to which 2 to 4 L12 dimers bind in a sequential fashion. Binds GTP-bound translation factors.

In terms of biological role, forms part of the ribosomal stalk which helps the ribosome interact with GTP-bound translation factors. Is thus essential for accurate translation. This chain is Large ribosomal subunit protein bL12, found in Polynucleobacter necessarius subsp. necessarius (strain STIR1).